We begin with the raw amino-acid sequence, 481 residues long: GTPase Der (481 aa).

EngA-type G domains lie at 47–210 and 221–394; these read PVLA…PDVS and RRVA…ESWE. GTP-binding positions include 53–60, 100–104, 162–165, 227–234, 274–278, and 339–342; these read GRPNVGKS, DTGGW, NKVD, DTAGI, and NKWD. A KH-like domain is found at 395 to 477; it reads TRIPTGKFNA…PIVLNMRVRE (83 aa).

Belongs to the TRAFAC class TrmE-Era-EngA-EngB-Septin-like GTPase superfamily. EngA (Der) GTPase family. Associates with the 50S ribosomal subunit.

Functionally, GTPase that plays an essential role in the late steps of ribosome biogenesis. The sequence is that of GTPase Der from Leifsonia xyli subsp. xyli (strain CTCB07).